We begin with the raw amino-acid sequence, 236 residues long: Small ribosomal subunit protein uS5 (236 aa).

Residues glutamate 61–isoleucine 124 enclose the S5 DRBM domain.

It belongs to the universal ribosomal protein uS5 family. In terms of assembly, part of the 30S ribosomal subunit. Contacts protein S4.

Its function is as follows. With S4 and S12 plays an important role in translational accuracy. The sequence is that of Small ribosomal subunit protein uS5 from Pyrococcus furiosus (strain ATCC 43587 / DSM 3638 / JCM 8422 / Vc1).